The chain runs to 184 residues: Glutathione-regulated potassium-efflux system ancillary protein KefG (184 aa).

The protein belongs to the NAD(P)H dehydrogenase (quinone) family. KefG subfamily. Interacts with KefB.

It localises to the cell inner membrane. The catalysed reaction is a quinone + NADH + H(+) = a quinol + NAD(+). It carries out the reaction a quinone + NADPH + H(+) = a quinol + NADP(+). Its function is as follows. Regulatory subunit of a potassium efflux system that confers protection against electrophiles. Required for full activity of KefB. This Escherichia coli O1:K1 / APEC protein is Glutathione-regulated potassium-efflux system ancillary protein KefG.